A 114-amino-acid polypeptide reads, in one-letter code: Hydrogenase maturation factor HypA (114 aa).

His-2 contacts Ni(2+). Residues Cys-70, Cys-73, Cys-86, and Cys-89 each coordinate Zn(2+).

It belongs to the HypA/HybF family.

Its function is as follows. Involved in the maturation of [NiFe] hydrogenases. Required for nickel insertion into the metal center of the hydrogenase. This chain is Hydrogenase maturation factor HypA, found in Crocosphaera subtropica (strain ATCC 51142 / BH68) (Cyanothece sp. (strain ATCC 51142)).